We begin with the raw amino-acid sequence, 295 residues long: UDP-3-O-acyl-N-acetylglucosamine deacetylase (295 aa).

Residues H77, H233, and D237 each coordinate Zn(2+). H260 serves as the catalytic Proton donor.

The protein belongs to the LpxC family. Requires Zn(2+) as cofactor.

It carries out the reaction a UDP-3-O-[(3R)-3-hydroxyacyl]-N-acetyl-alpha-D-glucosamine + H2O = a UDP-3-O-[(3R)-3-hydroxyacyl]-alpha-D-glucosamine + acetate. Its pathway is glycolipid biosynthesis; lipid IV(A) biosynthesis; lipid IV(A) from (3R)-3-hydroxytetradecanoyl-[acyl-carrier-protein] and UDP-N-acetyl-alpha-D-glucosamine: step 2/6. In terms of biological role, catalyzes the hydrolysis of UDP-3-O-myristoyl-N-acetylglucosamine to form UDP-3-O-myristoylglucosamine and acetate, the committed step in lipid A biosynthesis. This is UDP-3-O-acyl-N-acetylglucosamine deacetylase from Solibacter usitatus (strain Ellin6076).